The sequence spans 361 residues: Protein RecA (361 aa).

68 to 75 contacts ATP; it reads GPESSGKT. The segment at 342 to 361 is disordered; the sequence is PEGAKENISAKDDVAVDTKE. Residues 344 to 361 show a composition bias toward basic and acidic residues; sequence GAKENISAKDDVAVDTKE.

This sequence belongs to the RecA family.

Its subcellular location is the cytoplasm. Can catalyze the hydrolysis of ATP in the presence of single-stranded DNA, the ATP-dependent uptake of single-stranded DNA by duplex DNA, and the ATP-dependent hybridization of homologous single-stranded DNAs. It interacts with LexA causing its activation and leading to its autocatalytic cleavage. The sequence is that of Protein RecA from Clostridium beijerinckii (strain ATCC 51743 / NCIMB 8052) (Clostridium acetobutylicum).